The primary structure comprises 271 residues: MTYLQESSRPAVTVPKLQAMRDAGEKIAMLTCYDASFAALLDRAGTDVLLIGDSLGNVLQGHATTLPVSLDDIAYHTACVARAQPRALVVADLPFGTYGTPADAFANAVELMRAGAQMVKLEGGEWLAETIRFLVERSVPVCAHLGLTPQSVHAFGGFKVQGKTEAGAAQLLRDARAIEAAGAQLVVLEAVPTLVASEVTHMLKIPTIGIGAGADCSGQVLVLHDMLGIYPGKRPRFVKDFMQGQPNIEAAVDAYVKAVKDGSFPGPEHSF.

Residues aspartate 53 and aspartate 92 each coordinate Mg(2+). 3-methyl-2-oxobutanoate is bound by residues 53–54 (DS), aspartate 92, and lysine 120. Position 122 (glutamate 122) interacts with Mg(2+). Glutamate 189 functions as the Proton acceptor in the catalytic mechanism.

Belongs to the PanB family. Homodecamer; pentamer of dimers. The cofactor is Mg(2+).

It is found in the cytoplasm. The enzyme catalyses 3-methyl-2-oxobutanoate + (6R)-5,10-methylene-5,6,7,8-tetrahydrofolate + H2O = 2-dehydropantoate + (6S)-5,6,7,8-tetrahydrofolate. Its pathway is cofactor biosynthesis; (R)-pantothenate biosynthesis; (R)-pantoate from 3-methyl-2-oxobutanoate: step 1/2. Its function is as follows. Catalyzes the reversible reaction in which hydroxymethyl group from 5,10-methylenetetrahydrofolate is transferred onto alpha-ketoisovalerate to form ketopantoate. The chain is 3-methyl-2-oxobutanoate hydroxymethyltransferase from Burkholderia multivorans (strain ATCC 17616 / 249).